The sequence spans 293 residues: Probable endonuclease 4 (293 aa).

Zn(2+)-binding residues include histidine 78, histidine 118, glutamate 154, aspartate 188, histidine 191, histidine 225, aspartate 238, histidine 240, and glutamate 270.

It belongs to the AP endonuclease 2 family. Zn(2+) serves as cofactor.

The enzyme catalyses Endonucleolytic cleavage to 5'-phosphooligonucleotide end-products.. Endonuclease IV plays a role in DNA repair. It cleaves phosphodiester bonds at apurinic or apyrimidinic (AP) sites, generating a 3'-hydroxyl group and a 5'-terminal sugar phosphate. The chain is Probable endonuclease 4 from Vibrio vulnificus (strain CMCP6).